A 481-amino-acid polypeptide reads, in one-letter code: MEYEAKKGKKGFVSPIRRLVFPKAARQAAFRSSVSRRPLHSMPLYPPDYLIDPHILLCDYLEKEVKFLGHLTWVTSSLNPSSRDELLQLLDTARQLKELPLKTTPEQDSILSLSARCLLLTWRDNEELILRIPTHEIAAASYLQDDALHLLVLKTGLGVDPVPAGMDGSPGGSGRDPGPPGAAPEKRRVGTAERRHTICSLDWRVAWGGGAGAEARAAGGGGSLERQRAGARASGSWERRQTFSGSWERRHAGGGAGKPGGSWERRQASGGVGGSWERRHPGPNPLDPQNHSPDAYCNLVILAVANRDAAEESCALICQVFQIIYGDQSIECVDRAGYHYRSTPKRPWLSSCTMAPRTHLKRATVAHPHRLSTAPTAAVSTTAAGPSSSYRITWSRCGVSWVLLRSSSLHCCYETIVWGCLSRTTVQVCRNSMGTDGSSFSLECGPSSQIRTSATSRASWRVWVSARAESSLTALAASSAA.

Disordered regions lie at residues 161–193 (PVPA…GTAE) and 214–290 (EARA…DPQN). The segment covering 184-193 (PEKRRVGTAE) has biased composition (basic and acidic residues). Over residues 214–223 (EARAAGGGGS) the composition is skewed to gly residues. Residues 237–251 (WERRQTFSGSWERRH) show a composition bias toward basic and acidic residues.

The protein belongs to the CCM2 family.

This is Cerebral cavernous malformations 2 protein-like (Ccm2l) from Mus musculus (Mouse).